We begin with the raw amino-acid sequence, 213 residues long: Proteasome subunit beta (213 aa).

The propeptide at 1–11 (MSMIEEKIYKG) is removed in mature form; by autocatalysis. Thr12 acts as the Nucleophile in catalysis.

Belongs to the peptidase T1B family. As to quaternary structure, the 20S proteasome core is composed of 14 alpha and 14 beta subunits that assemble into four stacked heptameric rings, resulting in a barrel-shaped structure. The two inner rings, each composed of seven catalytic beta subunits, are sandwiched by two outer rings, each composed of seven alpha subunits. The catalytic chamber with the active sites is on the inside of the barrel. Has probably a gated structure, the ends of the cylinder being occluded by the N-termini of the alpha-subunits. Is likely capped at one or both ends by the proteasome regulatory ATPase, PAN.

Its subcellular location is the cytoplasm. The enzyme catalyses Cleavage of peptide bonds with very broad specificity.. With respect to regulation, the formation of the proteasomal ATPase PAN-20S proteasome complex, via the docking of the C-termini of PAN into the intersubunit pockets in the alpha-rings, triggers opening of the gate for substrate entry. Interconversion between the open-gate and close-gate conformations leads to a dynamic regulation of the 20S proteasome proteolysis activity. Component of the proteasome core, a large protease complex with broad specificity involved in protein degradation. This is Proteasome subunit beta from Archaeoglobus fulgidus (strain ATCC 49558 / DSM 4304 / JCM 9628 / NBRC 100126 / VC-16).